Reading from the N-terminus, the 67-residue chain is Large ribosomal subunit protein uL29 (67 aa).

Belongs to the universal ribosomal protein uL29 family.

The chain is Large ribosomal subunit protein uL29 from Ehrlichia ruminantium (strain Gardel).